The chain runs to 495 residues: NADH-ubiquinone oxidoreductase chain 4 (495 aa).

The next 14 helical transmembrane spans lie at 9-29 (YSNL…ILVI), 37-57 (IRGI…FFWI), 89-109 (ISLF…LVGF), 118-138 (EYMI…CSLD), 139-159 (LLIF…IIGV), 173-193 (FFLY…FIFF), 214-234 (ILLW…VPVH), 245-265 (PTAG…YGFL), 272-292 (FPEA…IAII), 307-327 (IIAY…FSLN), 335-355 (ILLM…VGAL), 367-387 (YGGL…FTLA), 413-433 (LVAT…LWLY), and 457-477 (VLIF…PEVF).

It belongs to the complex I subunit 4 family.

The protein localises to the mitochondrion membrane. The enzyme catalyses a ubiquinone + NADH + 5 H(+)(in) = a ubiquinol + NAD(+) + 4 H(+)(out). In terms of biological role, core subunit of the mitochondrial membrane respiratory chain NADH dehydrogenase (Complex I) that is believed to belong to the minimal assembly required for catalysis. Complex I functions in the transfer of electrons from NADH to the respiratory chain. The immediate electron acceptor for the enzyme is believed to be ubiquinone. This chain is NADH-ubiquinone oxidoreductase chain 4 (ND4), found in Marchantia polymorpha (Common liverwort).